The following is a 335-amino-acid chain: Beta-hexosaminidase (335 aa).

Substrate-binding positions include aspartate 60, arginine 68, arginine 133, and 163–164 (KH). The active-site Proton donor/acceptor is the histidine 176. Aspartate 247 (nucleophile) is an active-site residue.

Belongs to the glycosyl hydrolase 3 family. NagZ subfamily.

Its subcellular location is the cytoplasm. It carries out the reaction Hydrolysis of terminal non-reducing N-acetyl-D-hexosamine residues in N-acetyl-beta-D-hexosaminides.. It participates in cell wall biogenesis; peptidoglycan recycling. Plays a role in peptidoglycan recycling by cleaving the terminal beta-1,4-linked N-acetylglucosamine (GlcNAc) from peptide-linked peptidoglycan fragments, giving rise to free GlcNAc, anhydro-N-acetylmuramic acid and anhydro-N-acetylmuramic acid-linked peptides. The polypeptide is Beta-hexosaminidase (Xylella fastidiosa (strain M12)).